The sequence spans 166 residues: Podoplanin (166 aa).

Positions M1–G22 are cleaved as a signal peptide. At G23 to L135 the chain is on the extracellular side. Residues T34, T52, T55, and T56 are each glycosylated (O-linked (GalNAc...) threonine). Basic and acidic residues predominate over residues D54–T63. The interval D54 to T124 is disordered. S62 is a glycosylation site (O-linked (GalNAc...) serine). O-linked (GalNAc...) threonine glycosylation is found at T63, T71, and T80. The O-linked (GalNAc...) serine glycan is linked to S81. T83 carries O-linked (GalNAc...) threonine glycosylation. O-linked (GalNAc...) serine glycosylation occurs at S84. Positions S84–S93 are enriched in basic and acidic residues. O-linked (GalNAc...) threonine glycosylation is found at T94, T95, T96, T101, T105, T109, and T110. The segment covering T94–H103 has biased composition (polar residues). The span at S104–R114 shows a compositional bias: basic and acidic residues. A helical membrane pass occupies residues V136 to V156. Residues G137 to G141 form a requires for dimerization and lipid rafts association region. Topologically, residues M157–P166 are cytoplasmic. A requires for interaction with MSN and EZR region spans residues R158–K159.

The protein belongs to the podoplanin family. Homodimer. Interacts with CLEC1B; the interaction is independent of CLEC1B glycosylation and activates CLEC1B; the interaction is dependent of sialic acid on O-glycans. Interacts with CD9; this interaction is homophilic and attenuates platelet aggregation and pulmonary metastasis induced by PDPN. Interacts with LGALS8; the interaction is glycosylation-dependent; may participate in connection of the lymphatic endothelium to the surrounding extracellular matrix. Interacts with HSPA9. Interacts (via extracellular domain) with CD44; this interaction is required for PDPN-mediated directional migration and regulation of lamellipodia extension/stabilization during cell spreading and migration. Interacts (via cytoplasmic domain) with MSN and EZR; activates RHOA and promotes epithelial-mesenchymal transition. Interacts with CCL21; relocalized PDPN to the basolateral membrane. In terms of processing, extensively O-glycosylated. Contains sialic acid residues. O-glycosylation is necessary for platelet aggregation activity. Disialylated at Thr-52; sialic acid is critical for platelet-aggregating activity and for CLEC1B interaction. Post-translationally, the N-terminus is blocked. In adult kidney, expressed on the urinary surface and foot processes of podocytes and in parietal epithelial cells of Bowman's capsule where it is localized to luminal surfaces. In lung, expressed exclusively on luminal surfaces of type I alveolar epithelial cells and pleural mesothelial cells. Not expressed in type II alveolar cells. In bone, expressed in osteocytes and osteoblasts. In spleen, liver, stomach and intestine, expressed in mesoepithelium. Also expressed in thymic epithelial cells, choroid plexus and leptomeninges.

The protein resides in the membrane. The protein localises to the cell projection. It is found in the lamellipodium membrane. It localises to the filopodium membrane. Its subcellular location is the microvillus membrane. The protein resides in the ruffle membrane. The protein localises to the membrane raft. It is found in the apical cell membrane. It localises to the basolateral cell membrane. Its subcellular location is the invadopodium. Functionally, mediates effects on cell migration and adhesion through its different partners. During development plays a role in blood and lymphatic vessels separation by binding CLEC1B, triggering CLEC1B activation in platelets and leading to platelet activation and/or aggregation. Interaction with CD9, on the contrary, attenuates platelet aggregation and pulmonary metastasis induced by PDPN. Mediates effects on cell migration and adhesion through its different partners. Through MSN or EZR interaction promotes epithelial-mesenchymal transition (EMT) leading to ERZ phosphorylation and triggering RHOA activation leading to cell migration increase and invasiveness. Interaction with CD44 promotes directional cell migration in epithelial and tumor cells. In lymph nodes (LNs), controls fibroblastic reticular cells (FRCs) adhesion to the extracellular matrix (ECM) and contraction of the actomyosin by maintaining ERM proteins (EZR; MSN and RDX) and MYL9 activation through association with unknown transmembrane proteins. Engagement of CLEC1B by PDPN promotes FRCs relaxation by blocking lateral membrane interactions leading to reduction of ERM proteins (EZR; MSN and RDX) and MYL9 activation. Through binding with LGALS8 may participate in connection of the lymphatic endothelium to the surrounding extracellular matrix. In keratinocytes, induces changes in cell morphology showing an elongated shape, numerous membrane protrusions, major reorganization of the actin cytoskeleton, increased motility and decreased cell adhesion. Controls invadopodia stability and maturation leading to efficient degradation of the extracellular matrix (ECM) in tumor cells through modulation of RHOC activity in order to activate ROCK1/ROCK2 and LIMK1/LIMK2 and inactivation of CFL1. Required for normal lung cell proliferation and alveolus formation at birth. Does not function as a water channel or as a regulator of aquaporin-type water channels. Does not have any effect on folic acid or amino acid transport. This Rattus norvegicus (Rat) protein is Podoplanin.